Consider the following 289-residue polypeptide: NAD(P)H-hydrate epimerase (289 aa).

One can recognise a YjeF N-terminal domain in the interval 71–277 (AQTIDNELMS…SIVEKYNLKI (207 aa)). 122 to 126 (NNGGD) serves as a coordination point for (6S)-NADPHX. 2 residues coordinate K(+): Asn123 and Asp185. Residues 189–195 (GFSFRGE) and Asp218 each bind (6S)-NADPHX. A K(+)-binding site is contributed by Ser221.

This sequence belongs to the NnrE/AIBP family. Requires K(+) as cofactor.

The catalysed reaction is (6R)-NADHX = (6S)-NADHX. It catalyses the reaction (6R)-NADPHX = (6S)-NADPHX. Catalyzes the epimerization of the S- and R-forms of NAD(P)HX, a damaged form of NAD(P)H that is a result of enzymatic or heat-dependent hydration. This is a prerequisite for the S-specific NAD(P)H-hydrate dehydratase to allow the repair of both epimers of NAD(P)HX. The protein is NAD(P)H-hydrate epimerase of Plasmodium knowlesi (strain H).